A 567-amino-acid chain; its full sequence is Oxygen-dependent choline dehydrogenase (567 aa).

4–33 (DYIIIGAGSAGNVLAARLTEDADVTVLLLE) is a binding site for FAD. The active-site Proton acceptor is the H473.

Belongs to the GMC oxidoreductase family. It depends on FAD as a cofactor.

It catalyses the reaction choline + A = betaine aldehyde + AH2. It carries out the reaction betaine aldehyde + NAD(+) + H2O = glycine betaine + NADH + 2 H(+). Its pathway is amine and polyamine biosynthesis; betaine biosynthesis via choline pathway; betaine aldehyde from choline (cytochrome c reductase route): step 1/1. Functionally, involved in the biosynthesis of the osmoprotectant glycine betaine. Catalyzes the oxidation of choline to betaine aldehyde and betaine aldehyde to glycine betaine at the same rate. The polypeptide is Oxygen-dependent choline dehydrogenase (Yersinia pseudotuberculosis serotype O:1b (strain IP 31758)).